A 194-amino-acid polypeptide reads, in one-letter code: Imidazoleglycerol-phosphate dehydratase (194 aa).

This sequence belongs to the imidazoleglycerol-phosphate dehydratase family.

Its subcellular location is the cytoplasm. The catalysed reaction is D-erythro-1-(imidazol-4-yl)glycerol 3-phosphate = 3-(imidazol-4-yl)-2-oxopropyl phosphate + H2O. It functions in the pathway amino-acid biosynthesis; L-histidine biosynthesis; L-histidine from 5-phospho-alpha-D-ribose 1-diphosphate: step 6/9. This is Imidazoleglycerol-phosphate dehydratase from Chlorobaculum tepidum (strain ATCC 49652 / DSM 12025 / NBRC 103806 / TLS) (Chlorobium tepidum).